A 226-amino-acid polypeptide reads, in one-letter code: Cytidylate kinase (226 aa).

ATP is bound at residue 10 to 18 (GPASSGKST).

This sequence belongs to the cytidylate kinase family. Type 1 subfamily.

The protein resides in the cytoplasm. It catalyses the reaction CMP + ATP = CDP + ADP. The catalysed reaction is dCMP + ATP = dCDP + ADP. The sequence is that of Cytidylate kinase from Streptococcus pyogenes serotype M4 (strain MGAS10750).